The chain runs to 257 residues: Short-chain dehydrogenase reductase 3b (257 aa).

12 to 36 (IITGGASGIGAESVRLFTEHGARVV) provides a ligand contact to NAD(+). Ser-144 provides a ligand contact to substrate. The active-site Proton acceptor is Tyr-157.

This sequence belongs to the short-chain dehydrogenases/reductases (SDR) family.

The sequence is that of Short-chain dehydrogenase reductase 3b (SDR3b) from Arabidopsis thaliana (Mouse-ear cress).